A 352-amino-acid chain; its full sequence is MPKFRILIVDDSVIVRRIINNILSESDWIEVVGVAPSGQIALAKIPQVNPDLIILDVEMPEIDGLETLKRIRQTYKQLPVIMFSAITQRGAIATLDALTLGANDYITKPANMGSKEKAIEYIRKQLIPKIQVFCHRKVSLTKHCLAPSMTSFQRKTSTQLLTLKLEIVAIGVSTGGPQALYQLLHKFPASFRVPIVIVQHMPPVFTTRLAERLSSQCKIPVHEAKDRDVIKSGEAWIAPGNYHIILVREGKQVRIQTIQTPPENSCRPAVDVLFRSVAKLYQGAVLGVVLTGMGQDGLHGCTSIREMGGQVLVQDQASSVIWGMPGMVANAGLADQILPLNKLAEEIIRRIG.

Positions 5-123 constitute a Response regulatory domain; sequence RILIVDDSVI…SKEKAIEYIR (119 aa). Position 56 is a 4-aspartylphosphate (D56). Positions 166–352 constitute a CheB-type methylesterase domain; sequence EIVAIGVSTG…LAEEIIRRIG (187 aa). Active-site residues include S173, H200, and D296.

This sequence belongs to the CheB family. Phosphorylated by CheA. Phosphorylation of the N-terminal regulatory domain activates the methylesterase activity.

The protein resides in the cytoplasm. The catalysed reaction is [protein]-L-glutamate 5-O-methyl ester + H2O = L-glutamyl-[protein] + methanol + H(+). The enzyme catalyses L-glutaminyl-[protein] + H2O = L-glutamyl-[protein] + NH4(+). Its function is as follows. Involved in chemotaxis. Part of a chemotaxis signal transduction system that modulates chemotaxis in response to various stimuli. Catalyzes the demethylation of specific methylglutamate residues introduced into the chemoreceptors (methyl-accepting chemotaxis proteins or MCP) by CheR. Also mediates the irreversible deamidation of specific glutamine residues to glutamic acid. The polypeptide is Protein-glutamate methylesterase/protein-glutamine glutaminase (Trichodesmium erythraeum (strain IMS101)).